Consider the following 211-residue polypeptide: Shikimate kinase (211 aa).

A disordered region spans residues 1-23 (MNASANLCAASDNDPQPGDQEAA). 50–55 (GAGKTT) is an ATP binding site. A Mg(2+)-binding site is contributed by T54. Substrate-binding residues include D72, R96, and G118. R156 is a binding site for ATP. R175 lines the substrate pocket.

The protein belongs to the shikimate kinase family. Monomer. It depends on Mg(2+) as a cofactor.

The protein resides in the cytoplasm. The catalysed reaction is shikimate + ATP = 3-phosphoshikimate + ADP + H(+). It functions in the pathway metabolic intermediate biosynthesis; chorismate biosynthesis; chorismate from D-erythrose 4-phosphate and phosphoenolpyruvate: step 5/7. Its function is as follows. Catalyzes the specific phosphorylation of the 3-hydroxyl group of shikimic acid using ATP as a cosubstrate. In Bordetella bronchiseptica (strain ATCC BAA-588 / NCTC 13252 / RB50) (Alcaligenes bronchisepticus), this protein is Shikimate kinase.